We begin with the raw amino-acid sequence, 105 residues long: DNA-directed RNA polymerase subunit omega (105 aa).

It belongs to the RNA polymerase subunit omega family. The RNAP catalytic core consists of 2 alpha, 1 beta, 1 beta' and 1 omega subunit. When a sigma factor is associated with the core the holoenzyme is formed, which can initiate transcription.

It catalyses the reaction RNA(n) + a ribonucleoside 5'-triphosphate = RNA(n+1) + diphosphate. Its function is as follows. Promotes RNA polymerase assembly. Latches the N- and C-terminal regions of the beta' subunit thereby facilitating its interaction with the beta and alpha subunits. This Streptococcus mutans serotype c (strain ATCC 700610 / UA159) protein is DNA-directed RNA polymerase subunit omega.